Here is an 82-residue protein sequence, read N- to C-terminus: Ranatensin (82 aa).

The N-terminal stretch at Met-1 to Ser-27 is a signal peptide. Residues Val-28–Arg-47 constitute a propeptide that is removed on maturation. Met-58 is subject to Methionine amide. A propeptide spanning residues Ser-62–Ser-82 is cleaved from the precursor.

Belongs to the bombesin/neuromedin-B/ranatensin family. Expressed by the skin glands.

Its subcellular location is the secreted. This chain is Ranatensin, found in Lithobates pipiens (Northern leopard frog).